The following is a 163-amino-acid chain: Cytochrome b6-f complex subunit 4 (163 aa).

A run of 3 helical transmembrane segments spans residues 36-56 (LLYIFPVVILGTIACNVGLAV), 95-115 (LLGVLLMVSVPLGLLTVPFLE), and 131-151 (TVFLIGTAVALWLGIGATLPI).

The protein belongs to the cytochrome b family. PetD subfamily. In terms of assembly, the 4 large subunits of the cytochrome b6-f complex are cytochrome b6, subunit IV (17 kDa polypeptide, petD), cytochrome f and the Rieske protein, while the 4 small subunits are petG, petL, petM and petN. The complex functions as a dimer.

The protein resides in the plastid. Its subcellular location is the chloroplast thylakoid membrane. Functionally, component of the cytochrome b6-f complex, which mediates electron transfer between photosystem II (PSII) and photosystem I (PSI), cyclic electron flow around PSI, and state transitions. The chain is Cytochrome b6-f complex subunit 4 from Phalaenopsis aphrodite subsp. formosana (Moth orchid).